A 335-amino-acid chain; its full sequence is GTPase Obg (335 aa).

Residues 1–159 form the Obg domain; that stretch reads MKFVDSAKIS…IELEMELKLM (159 aa). Positions 160–323 constitute an OBG-type G domain; it reads ADVGLVGFPN…LKDELWRQIS (164 aa). Residues 166–173, 191–195, 213–216, 280–283, and 304–306 contribute to the GTP site; these read GFPNAGKS, FTTLV, DIPG, TKMD, and SSV. Residues S173 and T193 each coordinate Mg(2+).

The protein belongs to the TRAFAC class OBG-HflX-like GTPase superfamily. OBG GTPase family. Monomer. Requires Mg(2+) as cofactor.

Its subcellular location is the cytoplasm. Its function is as follows. An essential GTPase which binds GTP, GDP and possibly (p)ppGpp with moderate affinity, with high nucleotide exchange rates and a fairly low GTP hydrolysis rate. Plays a role in control of the cell cycle, stress response, ribosome biogenesis and in those bacteria that undergo differentiation, in morphogenesis control. The sequence is that of GTPase Obg from Chlorobaculum parvum (strain DSM 263 / NCIMB 8327) (Chlorobium vibrioforme subsp. thiosulfatophilum).